The primary structure comprises 409 residues: Peptidase T (409 aa).

A Zn(2+)-binding site is contributed by His-78. Asp-80 is a catalytic residue. Asp-140 contacts Zn(2+). Glu-173 functions as the Proton acceptor in the catalytic mechanism. Zn(2+) is bound by residues Glu-174, Asp-196, and His-379.

It belongs to the peptidase M20B family. Zn(2+) is required as a cofactor.

It is found in the cytoplasm. It catalyses the reaction Release of the N-terminal residue from a tripeptide.. Functionally, cleaves the N-terminal amino acid of tripeptides. The chain is Peptidase T from Serratia proteamaculans (strain 568).